Here is a 467-residue protein sequence, read N- to C-terminus: Iroquois-class homeodomain protein irx-1-A (467 aa).

Positions 126–188 (DPGRPKNATR…NARRRLKKEN (63 aa)) form a DNA-binding region, homeobox; TALE-type. Disordered regions lie at residues 197–306 (KEDD…PPHS), 318–344 (TSPD…QHPA), and 410–467 (SLSS…LPSA). Acidic residues-rich tracts occupy residues 215-225 (EDDEEIDLESI) and 233-244 (NDGEQSNEEEDE). Residues 245–262 (KLEHLRQGEKESLKKESE) are compositionally biased toward basic and acidic residues. The span at 415–431 (KTPERTSPKHSDRENVP) shows a compositional bias: basic and acidic residues. Over residues 447–460 (RENTLSQQEGTSRI) the composition is skewed to polar residues.

Belongs to the TALE/IRO homeobox family. In terms of tissue distribution, expressed early in neural differentiation in the neural plate, and expression continues in the neural tube after neural fold closure. Expressed in the presumptive midbrain territory. Also expressed in the prospective neural crest and the preplacodal field, anterior to the neural plate. Strongly expressed in the profundal placode and weakly expressed in the trigeminal placode. Also expressed in the mesoderm in the Spemann organizer from the start of gastrulation, and subsequently in its derivatives; namely in the notochord as well as in the somites of stage 25 embryos, and the somites and notochord of tailbud embryos. Also expressed in specific and overlapping dynamic patterns with irx2 and irx3 during pronephric kidney development. Renal expression begins in the dorsal region of the pronephric anlage at mid neurula stage and continues to at least tailbud stages where expression is confined to the intermediate tubule segment IT1. Renal expression is maintained at tadpole stages.

Its subcellular location is the nucleus. Functionally, acts partially redundantly with other irx members in neural patterning. Required for formation of the posterior forebrain, midbrain, hindbrain, and to a lesser extent, spinal cord. Acts early in neural plate development to induce expression of some but not all proneural genes, and specify a neural precursor state. Also up-regulates repressors that prevent neuronal differentiation. Patterns the neuroectoderm in both the anterior/posterior and dorsal/ventral axes. Acts primarily as a transcriptional repressor during neural development, and binds to the bmp4 promoter to repress gene expression and thus mediate down-regulation of bmp4 by wnt signaling. Controls multiple processes through bmp4-repression including neural plate development, neural crest specification and Spemann organizer development. Involved in the specification of the preplacodal field at the anterior border of the neural plate. Regulates the genetic cascade of interactions that are necessary for positioning the isthmus organizer and the formation of the midbrain-hindbrain boundary. Required during at least two stages of pronephros kidney development; during neurula stages, maintains transcription of key renal genes to define the size and identity of the pronephric anlage, probably in part through regulation of bmp-signaling. Subsequently required for proper formation of the intermediate tubule segment of the pronephros. Acts principally as a transcriptional activator during pronephros development. This is Iroquois-class homeodomain protein irx-1-A (irx1-a) from Xenopus laevis (African clawed frog).